Reading from the N-terminus, the 427-residue chain is Trigger factor (427 aa).

Positions 163–248 (GNIAIIDFKG…VKGIKVKELP (86 aa)) constitute a PPIase FKBP-type domain.

This sequence belongs to the FKBP-type PPIase family. Tig subfamily.

Its subcellular location is the cytoplasm. It catalyses the reaction [protein]-peptidylproline (omega=180) = [protein]-peptidylproline (omega=0). Functionally, involved in protein export. Acts as a chaperone by maintaining the newly synthesized protein in an open conformation. Functions as a peptidyl-prolyl cis-trans isomerase. This Clostridium botulinum (strain Alaska E43 / Type E3) protein is Trigger factor.